A 197-amino-acid polypeptide reads, in one-letter code: Molybdenum cofactor guanylyltransferase (197 aa).

Residues 10-12 (LAG), lysine 23, asparagine 51, aspartate 69, and aspartate 99 each bind GTP. Aspartate 99 contacts Mg(2+).

This sequence belongs to the MobA family. Monomer. The cofactor is Mg(2+).

It localises to the cytoplasm. The enzyme catalyses Mo-molybdopterin + GTP + H(+) = Mo-molybdopterin guanine dinucleotide + diphosphate. In terms of biological role, transfers a GMP moiety from GTP to Mo-molybdopterin (Mo-MPT) cofactor (Moco or molybdenum cofactor) to form Mo-molybdopterin guanine dinucleotide (Mo-MGD) cofactor. The chain is Molybdenum cofactor guanylyltransferase from Shewanella sp. (strain ANA-3).